Here is a 245-residue protein sequence, read N- to C-terminus: 14-3-3 protein zeta/delta (245 aa).

An N-acetylmethionine modification is found at M1. K3 is subject to N6-acetyllysine. S58 carries the phosphoserine; by PKA modification. N6-acetyllysine is present on K68. 3 positions are modified to phosphoserine: S184, S207, and S210. T232 is modified (phosphothreonine; by CK1).

It belongs to the 14-3-3 family. In terms of assembly, homodimer. Heterodimerizes with YWHAE. Homo- and heterodimerization is inhibited by phosphorylation on Ser-58. Interacts with FOXO4, NOXA1, SSH1 and ARHGEF2. Interacts with CDK16 and with WEE1 (C-terminal). Interacts with MLF1 (phosphorylated form); the interaction retains it in the cytoplasm. Interacts with BSPRY. Interacts with Thr-phosphorylated ITGB2. Interacts with Pseudomonas aeruginosa exoS (unphosphorylated form). Interacts with BAX; the interaction occurs in the cytoplasm. Under stress conditions, MAPK8-mediated phosphorylation releases BAX to mitochondria. Interacts with phosphorylated RAF1; the interaction is inhibited when YWHAZ is phosphorylated on Thr-232. Interacts with TP53; the interaction enhances p53 transcriptional activity. The Ser-58 phosphorylated form inhibits this interaction and p53 transcriptional activity. Interacts with ABL1 (phosphorylated form); the interaction retains ABL1 in the cytoplasm. Interacts with PKA-phosphorylated AANAT; the interaction modulates AANAT enzymatic activity by increasing affinity for arylalkylamines and acetyl-CoA and protecting the enzyme from dephosphorylation and proteasomal degradation. It may also prevent thiol-dependent inactivation. Interacts with AKT1; the interaction phosphorylates YWHAZ and modulates dimerization. Interacts with GAB2. Interacts with SAMSN1. Interacts with BCL2L11 and TLK2. Interacts with the 'Thr-369' phosphorylated form of DAPK2. Interacts with PI4KB, TBC1D22A and TBC1D22B. Interacts with ZFP36L1 (via phosphorylated form); this interaction occurs in a p38 MAPK- and AKT-signaling pathways. Interacts with SLITRK1. Interacts with AK5, LDB1, MADD, PDE1A and SMARCB1. Interacts with ARHGEF7 and GIT1. Interacts with MEFV. Interacts with ADAM22 (via C-terminus). The delta, brain-specific form differs from the zeta form in being phosphorylated. Phosphorylation on Ser-184 by MAPK8; promotes dissociation of BAX and translocation of BAX to mitochondria. Phosphorylation on Thr-232; inhibits binding of RAF1. Phosphorylated on Ser-58 by PKA and protein kinase C delta type catalytic subunit in a sphingosine-dependent fashion. Phosphorylation on Ser-58 by PKA; disrupts homodimerization and heterodimerization with YHAE and TP53.

Its subcellular location is the cytoplasm. It is found in the melanosome. Its function is as follows. Adapter protein implicated in the regulation of a large spectrum of both general and specialized signaling pathways. Binds to a large number of partners, usually by recognition of a phosphoserine or phosphothreonine motif. Binding generally results in the modulation of the activity of the binding partner. Promotes cytosolic retention and inactivation of TFEB transcription factor by binding to phosphorylated TFEB. Induces ARHGEF7 activity on RAC1 as well as lamellipodia and membrane ruffle formation. In neurons, regulates spine maturation through the modulation of ARHGEF7 activity. The chain is 14-3-3 protein zeta/delta (Ywhaz) from Mus musculus (Mouse).